The primary structure comprises 382 residues: Galactokinase (382 aa).

34–37 (EHTD) contacts substrate. 124–130 (GAGLSSS) contacts ATP. 2 residues coordinate Mg(2+): Ser130 and Glu162. The active-site Proton acceptor is the Asp174. Position 223 (Tyr223) interacts with substrate.

The protein belongs to the GHMP kinase family. GalK subfamily.

The protein resides in the cytoplasm. The enzyme catalyses alpha-D-galactose + ATP = alpha-D-galactose 1-phosphate + ADP + H(+). Its pathway is carbohydrate metabolism; galactose metabolism. In terms of biological role, catalyzes the transfer of the gamma-phosphate of ATP to D-galactose to form alpha-D-galactose-1-phosphate (Gal-1-P). The sequence is that of Galactokinase from Citrobacter koseri (strain ATCC BAA-895 / CDC 4225-83 / SGSC4696).